The primary structure comprises 407 residues: Phosphopentomutase (407 aa).

Mn(2+) is bound by residues D10, D306, H311, D347, H348, and H359.

This sequence belongs to the phosphopentomutase family. Mn(2+) serves as cofactor.

The protein resides in the cytoplasm. The enzyme catalyses 2-deoxy-alpha-D-ribose 1-phosphate = 2-deoxy-D-ribose 5-phosphate. The catalysed reaction is alpha-D-ribose 1-phosphate = D-ribose 5-phosphate. It functions in the pathway carbohydrate degradation; 2-deoxy-D-ribose 1-phosphate degradation; D-glyceraldehyde 3-phosphate and acetaldehyde from 2-deoxy-alpha-D-ribose 1-phosphate: step 1/2. In terms of biological role, isomerase that catalyzes the conversion of deoxy-ribose 1-phosphate (dRib-1-P) and ribose 1-phosphate (Rib-1-P) to deoxy-ribose 5-phosphate (dRib-5-P) and ribose 5-phosphate (Rib-5-P), respectively. The protein is Phosphopentomutase of Salmonella gallinarum (strain 287/91 / NCTC 13346).